The sequence spans 1034 residues: N-acetyl-beta-glucosaminyl-glycoprotein 4-beta-N-acetylgalactosaminyltransferase 1 (1034 aa).

Topologically, residues 1 to 12 are cytoplasmic; that stretch reads MPWFPVKKVRKQ. A helical; Signal-anchor for type II membrane protein transmembrane segment spans residues 13–31; it reads MKLLLLLLLLTCAAWLTYV. At 32–1034 the chain is on the lumenal side; the sequence is HRSLVRPGRA…SRKGARAQRS (1003 aa). Positions 51–104 are disordered; the sequence is DGEKLTGVTDSRGVRVPSSTQRSEDSSESHEEEQAPEGRGPNMLFPGGPRKPPP. A compositionally biased stretch (basic and acidic residues) spans 72–83; sequence RSEDSSESHEEE. The N-linked (GlcNAc...) asparagine glycan is linked to N106. Positions 109 to 279 constitute a PA14 domain; the sequence is HQTPPWREEF…LKFEIIDSAH (171 aa). Disordered stretches follow at residues 450 to 486 and 556 to 600; these read PTDA…DEQT and RVQL…QLHG. Residues 461–473 show a composition bias toward low complexity; the sequence is TPTPAASTGTTAS. The N-linked (GlcNAc...) asparagine glycan is linked to N611. 2 disordered regions span residues 626 to 669 and 782 to 801; these read SQVS…PLGR and GDED…HPDS. Over residues 636-661 the composition is skewed to acidic residues; it reads EGEEGEEDGAPGDEATSEDSEEEEEP.

This sequence belongs to the chondroitin N-acetylgalactosaminyltransferase family.

It localises to the golgi apparatus. It is found in the golgi stack membrane. It catalyses the reaction an N-acetyl-beta-D-glucosaminyl derivative + UDP-N-acetyl-alpha-D-galactosamine = an N-acetyl-beta-D-galactosaminyl-(1-&gt;4)-N-acetyl-beta-D-glucosaminyl derivative + UDP + H(+). Its function is as follows. Transfers N-acetylgalactosamine (GalNAc) from UDP-GalNAc to N-acetylglucosamine-beta-benzyl with a beta-1,4-linkage to form N,N'-diacetyllactosediamine, GalNAc-beta-1,4-GlcNAc structures in N-linked glycans and probably O-linked glycans. This chain is N-acetyl-beta-glucosaminyl-glycoprotein 4-beta-N-acetylgalactosaminyltransferase 1 (B4galnt4), found in Mus musculus (Mouse).